The sequence spans 64 residues: Large ribosomal subunit protein bL35 (64 aa).

Basic residues-rich tracts occupy residues 1–15 (MPKQ…KRFR) and 23–43 (VRQK…RTRR). Residues 1–64 (MPKQKSHSGA…AGRIKRLLAR (64 aa)) form a disordered region.

This sequence belongs to the bacterial ribosomal protein bL35 family.

The sequence is that of Large ribosomal subunit protein bL35 from Frankia alni (strain DSM 45986 / CECT 9034 / ACN14a).